The chain runs to 172 residues: Diphosphoinositol polyphosphate phosphohydrolase 1 (172 aa).

M1 is modified (N-acetylmethionine). Substrate is bound by residues R10, 18 to 20 (KKR), and 39 to 41 (SSR). The Nudix hydrolase domain occupies 17–144 (YKKRAACLCF…VQASYFETLR (128 aa)). The Mg(2+) site is built by G50 and E66. The short motif at 51 to 72 (GGMEPEEEPGTAAVREVCEEAG) is the Nudix box element. E69 (proton acceptor) is an active-site residue. E70 contributes to the Mg(2+) binding site. Substrate contacts are provided by residues 89-91 (RKH), R115, and K133.

The protein belongs to the Nudix hydrolase family. DIPP subfamily. In terms of assembly, monomer. It depends on Mg(2+) as a cofactor. Mn(2+) serves as cofactor. Requires Zn(2+) as cofactor.

The protein resides in the cytoplasm. It localises to the nucleus. It carries out the reaction diphospho-myo-inositol polyphosphate + H2O = myo-inositol polyphosphate + phosphate.. The enzyme catalyses 5-diphospho-1D-myo-inositol 1,2,3,4,6-pentakisphosphate + H2O = 1D-myo-inositol hexakisphosphate + phosphate + H(+). The catalysed reaction is 3,5-bis(diphospho)-1D-myo-inositol 1,2,4,6-tetrakisphosphate + H2O = 3-diphospho-1D-myo-inositol 1,2,4,5,6-pentakisphosphate + phosphate + 2 H(+). It catalyses the reaction [phosphate](n+1) + n H2O = (n+1) phosphate + n H(+). It carries out the reaction P(1),P(5)-bis(5'-adenosyl) pentaphosphate + H2O = ADP + ATP + 2 H(+). The enzyme catalyses P(1),P(6)-bis(5'-adenosyl) hexaphosphate + H2O = 2 ATP + 2 H(+). The catalysed reaction is P(1),P(4)-bis(5'-adenosyl) tetraphosphate + H2O = AMP + ATP + 2 H(+). It catalyses the reaction a 5'-end (N(7)-methyl 5'-triphosphoguanosine)-ribonucleoside in mRNA + H2O = N(7)-methyl-GMP + a 5'-end diphospho-ribonucleoside in mRNA + 2 H(+). It carries out the reaction a 5'-end (N(7)-methyl 5'-triphosphoguanosine)-ribonucleoside in mRNA + H2O = N(7)-methyl-GDP + a 5'-end phospho-ribonucleoside in mRNA + 2 H(+). Functionally, cleaves a beta-phosphate from the diphosphate groups in PP-InsP5 (diphosphoinositol pentakisphosphate) and [PP]2-InsP4 (bisdiphosphoinositol tetrakisphosphate), suggesting that it may play a role in signal transduction. InsP6 (inositol hexakisphosphate) is not a substrate. Also able to catalyze the hydrolysis of dinucleoside oligophosphates, with diadenosine 5',5'''-P1,P6-hexaphosphate (Ap6A) and diadenosine 5',5'''- P1,P5-pentaphosphate (Ap5A) being the preferred substrates. The major reaction products are ADP and p4a from Ap6A and ADP and ATP from Ap5A. Also able to hydrolyze 5- phosphoribose 1-diphosphate. Acts as a decapping enzyme that can hydrolyze both monomethylated and unmethylated capped RNAs. Hydrolyzes monomethylated capped RNA after both the alpha- and beta-phosphates generating m7GMP + ppRNA and m7GDP + pRNA. Modulates the stability of a subset of mRNAs implicated in cell motility. Divalent cations zinc, magnesium and manganese determine its substrate specificity. Exhibits diphosphoinositol polyphosphate phosphohydrolase in the presence of magnesium ions, diadenosine hexaphosphate hydrolase activity in the presence of manganese ions and endopolyphosphatase activity in the presence of zinc ions. Plays an important role in limiting DNA damage and maintaining cell survival upon oxidative stress via its endopolyphosphatase activity. The sequence is that of Diphosphoinositol polyphosphate phosphohydrolase 1 from Bos taurus (Bovine).